Reading from the N-terminus, the 159-residue chain is Ribosomal RNA large subunit methyltransferase H (159 aa).

Residues Leu-76, Gly-107, and 126–131 (LSKLTM) each bind S-adenosyl-L-methionine.

It belongs to the RNA methyltransferase RlmH family. As to quaternary structure, homodimer.

The protein resides in the cytoplasm. The enzyme catalyses pseudouridine(1915) in 23S rRNA + S-adenosyl-L-methionine = N(3)-methylpseudouridine(1915) in 23S rRNA + S-adenosyl-L-homocysteine + H(+). Its function is as follows. Specifically methylates the pseudouridine at position 1915 (m3Psi1915) in 23S rRNA. The sequence is that of Ribosomal RNA large subunit methyltransferase H from Acinetobacter baumannii (strain SDF).